A 329-amino-acid chain; its full sequence is UPF0725 protein EMB2204 (329 aa).

This sequence belongs to the UPF0725 (EMB2204) family.

Functionally, may be involved in embryogenesis. In Arabidopsis thaliana (Mouse-ear cress), this protein is UPF0725 protein EMB2204 (EMB2204).